Reading from the N-terminus, the 292-residue chain is 11-beta-hydroxysteroid dehydrogenase 1 (292 aa).

The Cytoplasmic segment spans residues 1–7 (MAFMKKY). The chain crosses the membrane as a helical; Signal-anchor for type II membrane protein span at residues 8–24 (LLPILGIFLAYYYYSAN). The Lumenal segment spans residues 25–292 (EEFRPEMLRG…KYNMERFINN (268 aa)). NADP(+) is bound by residues 41 to 67 (GASKGIGREMAYHLARMGAHVVVTARS) and 92 to 93 (TM). N95 is a glycosylation site (N-linked (GlcNAc...) asparagine). Residue 119-121 (NHI) participates in NADP(+) binding. S170 contacts substrate. The active-site Proton acceptor is Y183. Position 183 to 187 (183 to 187 (YSASK)) interacts with NADP(+). N207 carries an N-linked (GlcNAc...) asparagine glycan. NADP(+) is bound by residues 216 to 222 (GLIDTDT) and 218 to 222 (IDTDT).

The protein belongs to the short-chain dehydrogenases/reductases (SDR) family. In terms of assembly, homodimer. In terms of tissue distribution, liver, kidney, lung, hypothalamus, anterior pituitary and placenta.

The protein localises to the endoplasmic reticulum membrane. The enzyme catalyses an 11beta-hydroxysteroid + NADP(+) = an 11-oxosteroid + NADPH + H(+). The catalysed reaction is corticosterone + NADP(+) = 11-dehydrocorticosterone + NADPH + H(+). It carries out the reaction cortisone + NADPH + H(+) = cortisol + NADP(+). It catalyses the reaction a 7beta-hydroxysteroid + NADP(+) = a 7-oxosteroid + NADPH + H(+). The enzyme catalyses 7-oxocholesterol + NADPH + H(+) = 7beta-hydroxycholesterol + NADP(+). The catalysed reaction is chenodeoxycholate + NADP(+) = 7-oxolithocholate + NADPH + H(+). It carries out the reaction 7-oxolithocholate + NADPH + H(+) = ursodeoxycholate + NADP(+). It catalyses the reaction glycochenodeoxycholate + NADP(+) = 7-oxoglycolithocholate + NADPH + H(+). The enzyme catalyses taurochenodeoxycholate + NADP(+) = 7-oxotaurolithocholate + NADPH + H(+). The catalysed reaction is tauroursodeoxycholate + NADP(+) = 7-oxotaurolithocholate + NADPH + H(+). It carries out the reaction glycoursodeoxycholate + NADP(+) = 7-oxoglycolithocholate + NADPH + H(+). It catalyses the reaction 7-oxopregnenolone + NADPH + H(+) = 7beta-hydroxypregnenolone + NADP(+). The enzyme catalyses 3beta,7alpha-dihydroxyandrost-5-en-17-one + NADP(+) = 3beta-hydroxy-5-androstene-7,17-dione + NADPH + H(+). The catalysed reaction is 3beta-hydroxy-5-androstene-7,17-dione + NADPH + H(+) = 3beta,7beta-dihydroxyandrost-5-en-17-one + NADP(+). It carries out the reaction 3beta-hydroxy-5alpha-androstane-7,17-dione + NADPH + H(+) = 3beta,7beta-dihydroxy-5alpha-androstan-17-one + NADP(+). In terms of biological role, controls the reversible conversion of biologically active glucocorticoids such as cortisone to cortisol, and 11-dehydrocorticosterone to corticosterone in the presence of NADP(H). Participates in the corticosteroid receptor-mediated anti-inflammatory response, as well as metabolic and homeostatic processes. Plays a role in the secretion of aqueous humor in the eye, maintaining a normotensive, intraocular environment. Bidirectional in vitro, predominantly functions as a reductase in vivo, thereby increasing the concentration of active glucocorticoids. It has broad substrate specificity, besides glucocorticoids, it accepts other steroid and sterol substrates. Interconverts 7-oxo- and 7-hydroxy-neurosteroids such as 7-oxopregnenolone and 7beta-hydroxypregnenolone, 7-oxodehydroepiandrosterone (3beta-hydroxy-5-androstene-7,17-dione) and 7beta-hydroxydehydroepiandrosterone (3beta,7beta-dihydroxyandrost-5-en-17-one), among others. Catalyzes the stereo-specific conversion of the major dietary oxysterol, 7-ketocholesterol (7-oxocholesterol), into the more polar 7-beta-hydroxycholesterol metabolite. 7-oxocholesterol is one of the most important oxysterols, it participates in several events such as induction of apoptosis, accumulation in atherosclerotic lesions, lipid peroxidation, and induction of foam cell formation. Mediates the 7-oxo reduction of 7-oxolithocholate mainly to chenodeoxycholate, and to a lesser extent to ursodeoxycholate, both in its free form and when conjugated to glycine or taurine, providing a link between glucocorticoid activation and bile acid metabolism. Catalyzes the synthesis of 7-beta-25-dihydroxycholesterol from 7-oxo-25-hydroxycholesterol in vitro, which acts as a ligand for the G-protein-coupled receptor (GPCR) Epstein-Barr virus-induced gene 2 (EBI2) and may thereby regulate immune cell migration. This is 11-beta-hydroxysteroid dehydrogenase 1 (HSD11B1) from Ovis aries (Sheep).